A 359-amino-acid chain; its full sequence is Acetoin catabolism protein X (359 aa).

The protein resides in the cell membrane. The protein operates within ketone degradation; acetoin degradation. Essential for acetoin catabolism. This chain is Acetoin catabolism protein X (acoX), found in Cupriavidus necator (strain ATCC 17699 / DSM 428 / KCTC 22496 / NCIMB 10442 / H16 / Stanier 337) (Ralstonia eutropha).